The chain runs to 1082 residues: Inner tegument protein (1082 aa).

Residues 604-1082 (DHIECLFNVS…QQDLITPLKF (479 aa)) form an interaction with large tegument protein region.

Belongs to the herpesviridae inner tegument protein family. Interacts (via C-terminus) with the large tegument protein/LTP (via N-terminus).

Its subcellular location is the virion tegument. The protein localises to the host cytoplasm. It is found in the host nucleus. It localises to the host Golgi apparatus. The protein resides in the host trans-Golgi network. Plays an essential role in cytoplasmic secondary envelopment during viral egress. Interacts with the capsid via the large tegument protein/LTP and participates in its transport to the host trans-Golgi network (TGN) where secondary envelopment occurs. Modulates tegumentation and capsid accumulation at the viral assembly complex. This chain is Inner tegument protein (U30), found in Homo sapiens (Human).